A 289-amino-acid polypeptide reads, in one-letter code: Acetyl-coenzyme A carboxylase carboxyl transferase subunit beta (289 aa).

A CoA carboxyltransferase N-terminal domain is found at 36–289; the sequence is MWLRCPHCHQ…LLKTGSVANE (254 aa). Residues Cys40, Cys43, Cys58, and Cys61 each contribute to the Zn(2+) site. The segment at 40–61 adopts a C4-type zinc-finger fold; it reads CPHCHQLLFAKQLTQYAVCPNC.

Belongs to the AccD/PCCB family. As to quaternary structure, acetyl-CoA carboxylase is a heterohexamer composed of biotin carboxyl carrier protein (AccB), biotin carboxylase (AccC) and two subunits each of ACCase subunit alpha (AccA) and ACCase subunit beta (AccD). Zn(2+) serves as cofactor.

The protein localises to the cytoplasm. The enzyme catalyses N(6)-carboxybiotinyl-L-lysyl-[protein] + acetyl-CoA = N(6)-biotinyl-L-lysyl-[protein] + malonyl-CoA. The protein operates within lipid metabolism; malonyl-CoA biosynthesis; malonyl-CoA from acetyl-CoA: step 1/1. Component of the acetyl coenzyme A carboxylase (ACC) complex. Biotin carboxylase (BC) catalyzes the carboxylation of biotin on its carrier protein (BCCP) and then the CO(2) group is transferred by the transcarboxylase to acetyl-CoA to form malonyl-CoA. The sequence is that of Acetyl-coenzyme A carboxylase carboxyl transferase subunit beta from Limosilactobacillus reuteri subsp. reuteri (strain JCM 1112) (Lactobacillus reuteri).